A 1373-amino-acid polypeptide reads, in one-letter code: DNA-directed RNA polymerase subunit beta (1373 aa).

This sequence belongs to the RNA polymerase beta chain family. The RNAP catalytic core consists of 2 alpha, 1 beta, 1 beta' and 1 omega subunit. When a sigma factor is associated with the core the holoenzyme is formed, which can initiate transcription.

It catalyses the reaction RNA(n) + a ribonucleoside 5'-triphosphate = RNA(n+1) + diphosphate. Functionally, DNA-dependent RNA polymerase catalyzes the transcription of DNA into RNA using the four ribonucleoside triphosphates as substrates. This Rickettsia conorii (strain ATCC VR-613 / Malish 7) protein is DNA-directed RNA polymerase subunit beta.